Consider the following 203-residue polypeptide: MSENDDLLVPLNDYLAAGVHIGTQQKTKDMEPFIYRTRADGLHVIDVRKTDERIRIAANFLSMYNTDEILVVSRRYYGQKPVSKFAEATGTTAIPGRFVPGTLTNPEYDGYLEPEVIVLTDPRADFQALVEAQSVGIPIVALCDTDNFTGNVDLAIPTNNKGRKALALVYWLLARELLKKLGRLEEDEEFEYDPEDFEGPPPR.

The protein belongs to the universal ribosomal protein uS2 family.

The chain is Small ribosomal subunit protein uS2 from Methanopyrus kandleri (strain AV19 / DSM 6324 / JCM 9639 / NBRC 100938).